A 469-amino-acid chain; its full sequence is 3-isopropylmalate dehydratase large subunit (469 aa).

Cys347, Cys410, and Cys413 together coordinate [4Fe-4S] cluster.

Belongs to the aconitase/IPM isomerase family. LeuC type 1 subfamily. In terms of assembly, heterodimer of LeuC and LeuD. Requires [4Fe-4S] cluster as cofactor.

It carries out the reaction (2R,3S)-3-isopropylmalate = (2S)-2-isopropylmalate. It functions in the pathway amino-acid biosynthesis; L-leucine biosynthesis; L-leucine from 3-methyl-2-oxobutanoate: step 2/4. Catalyzes the isomerization between 2-isopropylmalate and 3-isopropylmalate, via the formation of 2-isopropylmaleate. The sequence is that of 3-isopropylmalate dehydratase large subunit from Cupriavidus pinatubonensis (strain JMP 134 / LMG 1197) (Cupriavidus necator (strain JMP 134)).